Reading from the N-terminus, the 283-residue chain is Bifunctional protein FolD (283 aa).

Residues 165 to 167 (GRG), Thr192, and Val233 each bind NADP(+).

Belongs to the tetrahydrofolate dehydrogenase/cyclohydrolase family. In terms of assembly, homodimer.

The catalysed reaction is (6R)-5,10-methylene-5,6,7,8-tetrahydrofolate + NADP(+) = (6R)-5,10-methenyltetrahydrofolate + NADPH. It catalyses the reaction (6R)-5,10-methenyltetrahydrofolate + H2O = (6R)-10-formyltetrahydrofolate + H(+). Its pathway is one-carbon metabolism; tetrahydrofolate interconversion. Functionally, catalyzes the oxidation of 5,10-methylenetetrahydrofolate to 5,10-methenyltetrahydrofolate and then the hydrolysis of 5,10-methenyltetrahydrofolate to 10-formyltetrahydrofolate. The polypeptide is Bifunctional protein FolD (Thermobifida fusca (strain YX)).